We begin with the raw amino-acid sequence, 712 residues long: Cyclomaltodextrin glucanotransferase (712 aa).

An N-terminal signal peptide occupies residues 1–27; it reads MKRFMKLTAVWTLWLSLTLGLLSPVHA. The tract at residues 28 to 165 is A1; that stretch reads APDTSVSNKQ…NIKVIIDFAP (138 aa). 4 residues coordinate Ca(2+): Asp54, Asn56, Asn59, and Asn60. Cys70 and Cys77 are oxidised to a cystine. Residues Gly78 and Asp80 each contribute to the Ca(2+) site. 127 to 128 provides a ligand contact to substrate; the sequence is YW. Asn166 provides a ligand contact to Ca(2+). A b region spans residues 166-229; that stretch reads NHTSPASSDD…NLYDLADLNH (64 aa). His167 provides a ligand contact to substrate. Residue Ile217 coordinates Ca(2+). 220 to 223 is a substrate binding site; it reads NLYD. Asp226 lines the Ca(2+) pocket. Residues 230–433 are A2; sequence NNSSVDVYLK…LRKSNPAIAY (204 aa). Arg254 provides a ligand contact to substrate. Catalysis depends on Asp256, which acts as the Nucleophile. Position 259–260 (259–260) interacts with substrate; it reads KH. His260 lines the Ca(2+) pocket. Glu284 acts as the Proton donor in catalysis. Substrate is bound by residues His354, Asp398, and Arg402. The tract at residues 434-522 is c; sequence GSTQERWINN…GTAVWQYTTD (89 aa). Positions 523–608 are d; sequence ATAPINGNVG…SNIYDNFEVL (86 aa). The IPT/TIG domain occupies 526–606; the sequence is PINGNVGPMM…AASNIYDNFE (81 aa). In terms of domain architecture, CBM20 spans 607–712; the sequence is VLTGDQVTVR…TATVNVNWQP (106 aa). The segment at 609–712 is e; it reads TGDQVTVRFV…TATVNVNWQP (104 aa).

Belongs to the glycosyl hydrolase 13 family. As to quaternary structure, monomer. The cofactor is Ca(2+).

The protein resides in the secreted. The catalysed reaction is Cyclizes part of a (1-&gt;4)-alpha-D-glucan chain by formation of a (1-&gt;4)-alpha-D-glucosidic bond.. This chain is Cyclomaltodextrin glucanotransferase (cgt), found in Bacillus sp. (strain 38-2).